Reading from the N-terminus, the 364-residue chain is Aminomethyltransferase (364 aa).

Belongs to the GcvT family. The glycine cleavage system is composed of four proteins: P, T, L and H.

The catalysed reaction is N(6)-[(R)-S(8)-aminomethyldihydrolipoyl]-L-lysyl-[protein] + (6S)-5,6,7,8-tetrahydrofolate = N(6)-[(R)-dihydrolipoyl]-L-lysyl-[protein] + (6R)-5,10-methylene-5,6,7,8-tetrahydrofolate + NH4(+). The glycine cleavage system catalyzes the degradation of glycine. This chain is Aminomethyltransferase, found in Shigella flexneri.